The primary structure comprises 354 residues: Chorismate synthase (354 aa).

NADP(+)-binding residues include Arg48 and Arg54. Residues 125 to 127 (RSS), 238 to 239 (NA), Gly278, 293 to 297 (KPTSS), and Arg319 each bind FMN.

This sequence belongs to the chorismate synthase family. Homotetramer. The cofactor is FMNH2.

The catalysed reaction is 5-O-(1-carboxyvinyl)-3-phosphoshikimate = chorismate + phosphate. It functions in the pathway metabolic intermediate biosynthesis; chorismate biosynthesis; chorismate from D-erythrose 4-phosphate and phosphoenolpyruvate: step 7/7. In terms of biological role, catalyzes the anti-1,4-elimination of the C-3 phosphate and the C-6 proR hydrogen from 5-enolpyruvylshikimate-3-phosphate (EPSP) to yield chorismate, which is the branch point compound that serves as the starting substrate for the three terminal pathways of aromatic amino acid biosynthesis. This reaction introduces a second double bond into the aromatic ring system. The chain is Chorismate synthase from Buchnera aphidicola subsp. Acyrthosiphon pisum (strain 5A).